Reading from the N-terminus, the 508-residue chain is Photosystem II CP47 reaction center protein (508 aa).

6 helical membrane passes run 21 to 36, 101 to 115, 140 to 156, 203 to 218, 237 to 252, and 457 to 472; these read AVHL…WAGS, IILS…IWHW, GIHL…FGAF, IAAG…FHLS, VLSS…AFVV, and NFAL…HGSR.

Belongs to the PsbB/PsbC family. PsbB subfamily. In terms of assembly, PSII is composed of 1 copy each of membrane proteins PsbA, PsbB, PsbC, PsbD, PsbE, PsbF, PsbH, PsbI, PsbJ, PsbK, PsbL, PsbM, PsbT, PsbX, PsbY, PsbZ, Psb30/Ycf12, at least 3 peripheral proteins of the oxygen-evolving complex and a large number of cofactors. It forms dimeric complexes. Binds multiple chlorophylls. PSII binds additional chlorophylls, carotenoids and specific lipids. serves as cofactor.

It localises to the plastid. Its subcellular location is the chloroplast thylakoid membrane. One of the components of the core complex of photosystem II (PSII). It binds chlorophyll and helps catalyze the primary light-induced photochemical processes of PSII. PSII is a light-driven water:plastoquinone oxidoreductase, using light energy to abstract electrons from H(2)O, generating O(2) and a proton gradient subsequently used for ATP formation. This chain is Photosystem II CP47 reaction center protein, found in Staurastrum punctulatum (Green alga).